We begin with the raw amino-acid sequence, 99 residues long: Duplicate procyclin (99 aa).

The polypeptide is Duplicate procyclin (Trypanosoma brucei brucei).